The primary structure comprises 318 residues: MANTLEQLKLYTTIVADTGDIEAIKRYQPEDATTNPSLILKAAQIPEYESLIDNAIDWAKSQSDDLAQQLDDASDKLAVNIGVEILKLVPGRISTEVDARLSFDKEQSIAKAHKLVRLYKEAGVDKSRILIKLASTWEGICAAKELEKEGINCNLTLLFSFAQARACAEAGAYLISPFVGRILDWYKKDTGKDYDAVNDPGVVSVTEIYNYYKQHGFNTVVMGASFRNIGEIIELAGCDRLTIGPSLLEELANSQIDITPKLVAATSTVAAEAPLTEAQFRWDFNQDPMAVDKLAEGIRNFAIDQGKLEVMLTAKLAN.

K132 functions as the Schiff-base intermediate with substrate in the catalytic mechanism.

The protein belongs to the transaldolase family. Type 1 subfamily. Homodimer.

It is found in the cytoplasm. The catalysed reaction is D-sedoheptulose 7-phosphate + D-glyceraldehyde 3-phosphate = D-erythrose 4-phosphate + beta-D-fructose 6-phosphate. Its pathway is carbohydrate degradation; pentose phosphate pathway; D-glyceraldehyde 3-phosphate and beta-D-fructose 6-phosphate from D-ribose 5-phosphate and D-xylulose 5-phosphate (non-oxidative stage): step 2/3. In terms of biological role, transaldolase is important for the balance of metabolites in the pentose-phosphate pathway. In Shewanella baltica (strain OS223), this protein is Transaldolase.